We begin with the raw amino-acid sequence, 186 residues long: Protein GrpE (186 aa).

The segment covering 1 to 22 has biased composition (basic and acidic residues); that stretch reads MSDSNKEKKKKFADMVSKRKGD. Positions 1-35 are disordered; sequence MSDSNKEKKKKFADMVSKRKGDDQEDQQTGDLSEE. Positions 23 to 34 are enriched in acidic residues; it reads DQEDQQTGDLSE.

Belongs to the GrpE family. In terms of assembly, homodimer.

The protein localises to the cytoplasm. Its function is as follows. Participates actively in the response to hyperosmotic and heat shock by preventing the aggregation of stress-denatured proteins, in association with DnaK and GrpE. It is the nucleotide exchange factor for DnaK and may function as a thermosensor. Unfolded proteins bind initially to DnaJ; upon interaction with the DnaJ-bound protein, DnaK hydrolyzes its bound ATP, resulting in the formation of a stable complex. GrpE releases ADP from DnaK; ATP binding to DnaK triggers the release of the substrate protein, thus completing the reaction cycle. Several rounds of ATP-dependent interactions between DnaJ, DnaK and GrpE are required for fully efficient folding. In Wolbachia pipientis subsp. Culex pipiens (strain wPip), this protein is Protein GrpE.